A 449-amino-acid chain; its full sequence is Methylenetetrahydrofolate--tRNA-(uracil-5-)-methyltransferase TrmFO (449 aa).

10–15 (GGGLAG) provides a ligand contact to FAD.

The protein belongs to the MnmG family. TrmFO subfamily. FAD is required as a cofactor.

Its subcellular location is the cytoplasm. It carries out the reaction uridine(54) in tRNA + (6R)-5,10-methylene-5,6,7,8-tetrahydrofolate + NADH + H(+) = 5-methyluridine(54) in tRNA + (6S)-5,6,7,8-tetrahydrofolate + NAD(+). It catalyses the reaction uridine(54) in tRNA + (6R)-5,10-methylene-5,6,7,8-tetrahydrofolate + NADPH + H(+) = 5-methyluridine(54) in tRNA + (6S)-5,6,7,8-tetrahydrofolate + NADP(+). In terms of biological role, catalyzes the folate-dependent formation of 5-methyl-uridine at position 54 (M-5-U54) in all tRNAs. This chain is Methylenetetrahydrofolate--tRNA-(uracil-5-)-methyltransferase TrmFO, found in Sphingopyxis alaskensis (strain DSM 13593 / LMG 18877 / RB2256) (Sphingomonas alaskensis).